The chain runs to 282 residues: PTS system sorbose-specific EIID component (282 aa).

In terms of domain architecture, PTS EIID spans 13–281; sequence TKITKGDMFK…GIVGYWLGIL (269 aa). The next 4 helical transmembrane spans lie at 135 to 155, 197 to 217, 234 to 254, and 261 to 281; these read LGASLALQGSWLGPILFFVAF, GLFIMGILVTKWTTINVPLVV, ILDQFCPGLLALGWTLLCMYL, and PILLIFALFGVGIVGYWLGIL.

Its subcellular location is the cell membrane. In terms of biological role, the phosphoenolpyruvate-dependent sugar phosphotransferase system (PTS), a major carbohydrate active transport system, catalyzes the phosphorylation of incoming sugar substrates concomitant with their translocation across the cell membrane. The enzyme II SorABCD PTS system is involved in L-sorbose transport. This is PTS system sorbose-specific EIID component from Lacticaseibacillus casei (Lactobacillus casei).